Reading from the N-terminus, the 2217-residue chain is DNA polymerase epsilon catalytic subunit A (2217 aa).

4 residues coordinate Zn(2+): C2104, C2107, C2126, and C2129. The CysA-type zinc-finger motif lies at 2104–2129 (CEYCSYVSDLDLCRDGLDGKFQCPRC). [4Fe-4S] cluster is bound by residues C2160, C2163, C2175, and C2177. The CysB motif signature appears at 2160–2177 (CEKCHTVKRDLMSTNCNC).

The protein belongs to the DNA polymerase type-B family. Heterotetramer. Consists of 4 subunits: POL2, DPB2, DPB3 and DPB4. [4Fe-4S] cluster serves as cofactor.

The protein resides in the nucleus. The enzyme catalyses DNA(n) + a 2'-deoxyribonucleoside 5'-triphosphate = DNA(n+1) + diphosphate. Functionally, DNA polymerase II participates in chromosomal DNA replication. This chain is DNA polymerase epsilon catalytic subunit A (POL2), found in Candida glabrata (strain ATCC 2001 / BCRC 20586 / JCM 3761 / NBRC 0622 / NRRL Y-65 / CBS 138) (Yeast).